The primary structure comprises 1072 residues: MYKTKLIPVMNEDAVIVQQTDSIQDPKVTPDDTVVDSSGDVHEAIDDDVEASSPMELDSAVTNDARVLESERSEKDGVVGSEEEDEIKSEDVLIDKDDESSEVKEEEEEEDGSDDQSSELGSEADEKELDLGLKEEKKGVSDYKSLLSEFDDYVASEKMGSGVSRALSYGFEVGDLVWGKVKSHPWWPGHIFNEAFASPSVRRMRRIDHVLVAFFGDSSYGWFDPAELIPFEPNLEEKSQQTVSKHFVRAVEEAKDEASRRSALGLTCKCRNPYNFRPSNVEDYFAVDVPDYELQAVYSVDQIKNSRDKFLPAETISFVKQLALAPQECDPDSLKFMKKKAVVFAFRKSVFEEFDETYAQAFGTKSPRSSVSTLEPHNRAPPRAPLSGPLVIAETLGDLKSSKKPTKVKVSKKKDKYLLKRRDEAGDKSVQFGEIEASSEASHIQGIDGSLDGDFGLQRRAPTLQTPMKDEKSGIVSMDFASSNTAIPGKEFSASKPSLDEEKGLAEKSKERMEERAAVLPEHGKSEAMASLKPKEEAGTDLGSAGSSLQPLLESHTSASEGKSSTGSVIKKVKVAKRSSSEMSSENPPSEPKKKKKKKKEPDSDHPVKRKNLYSGEAGAKKLSQLGSAHLQTYMEADVPQLLSHLQDLSLDPFHGLSVASFGTARKFFLRFRSLNYQKSLSVSSSDATVENARDTKPSKPVKTVKRTEDPSKAGKKRLSSDRQDEIPSAKKLKKTNQLKSMASEKKIIREAKDSIKPIREPSRVVQAKPARGQTGKKTAPSVKVVEPTMLVMKFPPGTSLPSAALLKARFGRFGLLDQSAIRVFWKSSTCRVVFLYKADAQTAFRYATGNNTLFGNVNVKYFLRDVDAPKAEPREPENTKEDDEPQSQWLDQAPPLHQPTLPPPNVNLKSCLKKPVDDPSSSSNNGNGNRAAVRVKFMLGGEENSSKANTEPPQVTMTLNRNSGPSSSSSSVPMEFVSKKFQNVVHHQQLPPSTLPPILPLPPQYTKPQQLPIKPVDHVEPPMPPSRNFRGPIPAVSAGDISHQMLNLLSKCNEVVANVTGLLGYVPYHPL.

A disordered region spans residues 21 to 133; the sequence is DSIQDPKVTP…ADEKELDLGL (113 aa). Residues 25–38 show a composition bias toward low complexity; sequence DPKVTPDDTVVDSS. The span at 66–77 shows a compositional bias: basic and acidic residues; that stretch reads RVLESERSEKDG. Residues 96–128 show a composition bias toward acidic residues; it reads KDDESSEVKEEEEEEDGSDDQSSELGSEADEKE. A PWWP domain is found at 173 to 234; the sequence is VGDLVWGKVK…PAELIPFEPN (62 aa). Residues 365–387 are disordered; the sequence is KSPRSSVSTLEPHNRAPPRAPLS. Residues 366–375 show a composition bias toward polar residues; sequence SPRSSVSTLE. The Nuclear localization signal 1 motif lies at 402 to 409; the sequence is SKKPTKVK. 4 disordered regions span residues 486 to 619, 681 to 738, 871 to 931, and 944 to 973; these read AIPG…GEAG, LSVS…KTNQ, KAEP…NGNR, and ENSS…SSSV. A compositionally biased stretch (basic and acidic residues) spans 498 to 526; that stretch reads SLDEEKGLAEKSKERMEERAAVLPEHGKS. Polar residues predominate over residues 545 to 568; that stretch reads AGSSLQPLLESHTSASEGKSSTGS. Short sequence motifs (nuclear localization signal) lie at residues 596–603, 705–712, and 733–740; these read KKKKKEPD, VKRTEDPS, and LKKTNQLK. A compositionally biased stretch (basic and acidic residues) spans 706–729; the sequence is KRTEDPSKAGKKRLSSDRQDEIPS. Basic and acidic residues predominate over residues 871-880; it reads KAEPREPENT. A compositionally biased stretch (pro residues) spans 897 to 906; the sequence is LHQPTLPPPN. Low complexity predominate over residues 921 to 930; that stretch reads SSSSNNGNGN. The span at 947–966 shows a compositional bias: polar residues; it reads SKANTEPPQVTMTLNRNSGP.

It belongs to the PDP family. In terms of assembly, interacts with MSI4/FVE. Component of the PRC2 (polycomb repressive complex 2) complex which regulates histone methylation on histone H3K27.

The protein resides in the nucleus. Functionally, together with PDP2, PDP3 and PDP6, interacts with MSI4/FVE and MSI5 to suppress FLC, MAF4 and MAF5 expression by regulating the function of the PRC2 complex and modulating H3K27me3 level, thereby promoting flowering. The sequence is that of PWWP domain-containing protein 1 from Arabidopsis thaliana (Mouse-ear cress).